The chain runs to 400 residues: Argininosuccinate synthase (400 aa).

Residues 11–19 (AYSGGLDTS) and alanine 38 each bind ATP. Residues tyrosine 89 and serine 94 each coordinate L-citrulline. Glycine 119 contacts ATP. 3 residues coordinate L-aspartate: threonine 121, asparagine 125, and aspartate 126. Asparagine 125 contributes to the L-citrulline binding site. L-citrulline is bound by residues arginine 129, serine 179, serine 188, glutamate 264, and tyrosine 276.

It belongs to the argininosuccinate synthase family. Type 1 subfamily. As to quaternary structure, homotetramer.

The protein localises to the cytoplasm. The enzyme catalyses L-citrulline + L-aspartate + ATP = 2-(N(omega)-L-arginino)succinate + AMP + diphosphate + H(+). Its pathway is amino-acid biosynthesis; L-arginine biosynthesis; L-arginine from L-ornithine and carbamoyl phosphate: step 2/3. The sequence is that of Argininosuccinate synthase from Oleidesulfovibrio alaskensis (strain ATCC BAA-1058 / DSM 17464 / G20) (Desulfovibrio alaskensis).